A 141-amino-acid chain; its full sequence is Aspartate 1-decarboxylase (141 aa).

The active-site Schiff-base intermediate with substrate; via pyruvic acid is S25. S25 bears the Pyruvic acid (Ser) mark. Residue T57 coordinates substrate. The active-site Proton donor is the Y58. 73–75 (GAA) serves as a coordination point for substrate. The disordered stretch occupies residues 121 to 141 (ASAPVPGSRTERSPQAVVAGG).

It belongs to the PanD family. Heterooctamer of four alpha and four beta subunits. Requires pyruvate as cofactor. Post-translationally, is synthesized initially as an inactive proenzyme, which is activated by self-cleavage at a specific serine bond to produce a beta-subunit with a hydroxyl group at its C-terminus and an alpha-subunit with a pyruvoyl group at its N-terminus.

The protein resides in the cytoplasm. It carries out the reaction L-aspartate + H(+) = beta-alanine + CO2. It participates in cofactor biosynthesis; (R)-pantothenate biosynthesis; beta-alanine from L-aspartate: step 1/1. Its function is as follows. Catalyzes the pyruvoyl-dependent decarboxylation of aspartate to produce beta-alanine. The sequence is that of Aspartate 1-decarboxylase from Streptomyces griseus subsp. griseus (strain JCM 4626 / CBS 651.72 / NBRC 13350 / KCC S-0626 / ISP 5235).